A 152-amino-acid chain; its full sequence is Ribonuclease H (152 aa).

One can recognise an RNase H type-1 domain in the interval 6 to 147 (KKNNVIAYTD…ADELANKAIA (142 aa)). Residues aspartate 15, glutamate 53, aspartate 75, and aspartate 139 each coordinate Mg(2+).

Belongs to the RNase H family. As to quaternary structure, monomer. It depends on Mg(2+) as a cofactor.

The protein resides in the cytoplasm. It carries out the reaction Endonucleolytic cleavage to 5'-phosphomonoester.. In terms of biological role, endonuclease that specifically degrades the RNA of RNA-DNA hybrids. The polypeptide is Ribonuclease H (Francisella philomiragia subsp. philomiragia (strain ATCC 25017 / CCUG 19701 / FSC 153 / O#319-036)).